Consider the following 445-residue polypeptide: UDP-N-acetylmuramoylalanine--D-glutamate ligase (445 aa).

ATP is bound at residue 117-123 (GSNGKTT).

This sequence belongs to the MurCDEF family.

It localises to the cytoplasm. It catalyses the reaction UDP-N-acetyl-alpha-D-muramoyl-L-alanine + D-glutamate + ATP = UDP-N-acetyl-alpha-D-muramoyl-L-alanyl-D-glutamate + ADP + phosphate + H(+). It functions in the pathway cell wall biogenesis; peptidoglycan biosynthesis. Cell wall formation. Catalyzes the addition of glutamate to the nucleotide precursor UDP-N-acetylmuramoyl-L-alanine (UMA). This Neisseria meningitidis serogroup B (strain ATCC BAA-335 / MC58) protein is UDP-N-acetylmuramoylalanine--D-glutamate ligase.